The chain runs to 658 residues: Deoxynucleoside triphosphate triphosphohydrolase SAMHD1 (658 aa).

The tract at residues 23–68 is disordered; the sequence is SQPRVSEVAMQSAPLEQPAKRPRCDGSPRTPPSTPPATANLSADDD. Residue serine 49 is modified to Phosphoserine. Position 52 is a phosphothreonine (threonine 52). Serine 55 carries the post-translational modification Phosphoserine. Threonine 56 is subject to Phosphothreonine. Phosphoserine occurs at positions 64 and 125. The SAM domain maps to 77–142; that stretch reads WEPEDVCSFL…IECIQQLSQS (66 aa). GTP-binding residues include lysine 148 and valine 149. Residue asparagine 151 participates in dGTP binding. The GTP site is built by aspartate 169, glutamine 174, and arginine 177. The dGTP site is built by leucine 182 and valine 188. Positions 196-348 constitute an HD domain; the sequence is RFEHSLGVGY…GIDVDKWDYF (153 aa). Mn(2+) is bound by residues histidine 199, histidine 238, and aspartate 239. DGTP is bound by residues aspartate 239, histidine 247, histidine 265, and glutamate 266. Residue histidine 265 is part of the active site. Aspartate 343 contacts Mn(2+). DGTP is bound by residues tyrosine 347, aspartate 351, arginine 365, arginine 395, lysine 397, asparagine 401, tyrosine 417, histidine 419, and lysine 420. GTP-binding residues include arginine 494 and lysine 498. Lysine 509 participates in a covalent cross-link: Glycyl lysine isopeptide (Lys-Gly) (interchain with G-Cter in SUMO2). Lysine 565 lines the GTP pocket. DGTP is bound at residue lysine 565. Phosphothreonine is present on threonine 634. (Microbial infection) Phosphothreonine is present on threonine 634.

Belongs to the SAMHD1 family. In terms of assembly, homodimer; in absence of GTP and dNTP. Homotetramer; in GTP- and dNTP-bound form. Interacts with MRE11; leading to stimulate the exonuclease activity of MRE11. Interacts with RBBP8/CtIP. Interacts with RBBP8/CtIP. Interacts (via its C-terminus) with CD81. It depends on Zn(2+) as a cofactor. Post-translationally, phosphorylation at Thr-634 by CDK1 acts as a switch to control deoxynucleoside triphosphate (dNTPase)-dependent and -independent functions. Phosphorylation at Thr-634 takes place in cycling cells: it reduces the stability of the homotetramer, impairing the dNTPase activity and subsequent ability to restrict infection by viruses. It also inhibits ability to suppress LINE-1 retrotransposon activity. In contrast, phosphorylation at Thr-634 promotes DNA end resection at stalled replication forks in response to DNA damage. (Microbial infection) Phosphorylation at Thr-634 by mouse cytomegalovirus kinase M97 leads to a reduced level of dNTP hydrolase activity and the loss of viral restriction. In terms of processing, not phosphorylated by CDK1 at the C-terminus.

The protein localises to the nucleus. The protein resides in the chromosome. The enzyme catalyses a 2'-deoxyribonucleoside 5'-triphosphate + H2O = a 2'-deoxyribonucleoside + triphosphate + H(+). It carries out the reaction dATP + H2O = 2'-deoxyadenosine + triphosphate + H(+). The catalysed reaction is dCTP + H2O = 2'-deoxycytidine + triphosphate + H(+). It catalyses the reaction dGTP + H2O = 2'-deoxyguanosine + triphosphate + H(+). The enzyme catalyses dTTP + H2O = thymidine + triphosphate + H(+). Its activity is regulated as follows. Allosterically activated and regulated via the combined actions of GTP and dNTPs (dATP, dGTP, dTTP and dCTP): Allosteric site 1 binds GTP, while allosteric site 2 binds dNTP. Allosteric activation promotes the formation of highly active homotetramers. Isoform 1: Phosphorylation at Thr-634 impairs homotetramerization, thereby inhibiting dNTPase activity, leading to reduced ability to restrict infection by viruses. Its function is as follows. Protein that acts both as a host restriction factor involved in defense response to virus and as a regulator of DNA end resection at stalled replication forks. Has deoxynucleoside triphosphate (dNTPase) activity, which is required to restrict infection by viruses: dNTPase activity reduces cellular dNTP levels to levels too low for retroviral reverse transcription to occur, blocking early-stage virus replication in dendritic and other myeloid cells. Likewise, suppresses LINE-1 retrotransposon activity. In addition to virus restriction, dNTPase activity acts as a regulator of DNA precursor pools by regulating dNTP pools. Phosphorylation at Thr-634 acts as a switch to control dNTPase-dependent and -independent functions: it inhibits dNTPase activity and ability to restrict infection by viruses, while it promotes DNA end resection at stalled replication forks. Functions during S phase at stalled DNA replication forks to promote the resection of gapped or reversed forks: acts by stimulating the exonuclease activity of MRE11, activating the ATR-CHK1 pathway and allowing the forks to restart replication. Its ability to promote degradation of nascent DNA at stalled replication forks is required to prevent induction of type I interferons, thereby preventing chronic inflammation. Ability to promote DNA end resection at stalled replication forks is independent of dNTPase activity. Enhances immunoglobulin hypermutation in B-lymphocytes by promoting transversion mutation. The sequence is that of Deoxynucleoside triphosphate triphosphohydrolase SAMHD1 from Mus musculus (Mouse).